Reading from the N-terminus, the 339-residue chain is Dihydroorotate dehydrogenase (quinone) (339 aa).

FMN-binding positions include 62–66 (AGMDK) and Thr-86. Lys-66 serves as a coordination point for substrate. A substrate-binding site is contributed by 111-115 (NRMGF). Residues Asn-139 and Asn-172 each coordinate FMN. Asn-172 lines the substrate pocket. Ser-175 (nucleophile) is an active-site residue. Asn-177 provides a ligand contact to substrate. Residues Lys-217 and Thr-245 each contribute to the FMN site. 246 to 247 (NT) is a binding site for substrate. FMN is bound by residues Gly-268, Gly-297, and 318–319 (YS).

Belongs to the dihydroorotate dehydrogenase family. Type 2 subfamily. In terms of assembly, monomer. FMN is required as a cofactor.

Its subcellular location is the cell membrane. The catalysed reaction is (S)-dihydroorotate + a quinone = orotate + a quinol. It participates in pyrimidine metabolism; UMP biosynthesis via de novo pathway; orotate from (S)-dihydroorotate (quinone route): step 1/1. Its function is as follows. Catalyzes the conversion of dihydroorotate to orotate with quinone as electron acceptor. This Shewanella baltica (strain OS223) protein is Dihydroorotate dehydrogenase (quinone).